Here is a 150-residue protein sequence, read N- to C-terminus: Large ribosomal subunit protein uL15 (150 aa).

The segment at 18-43 (IVGRGSSSGWGKTSGKGHKGQQARSG) is disordered.

It belongs to the universal ribosomal protein uL15 family. As to quaternary structure, part of the 50S ribosomal subunit.

Functionally, binds to the 23S rRNA. The protein is Large ribosomal subunit protein uL15 of Treponema denticola (strain ATCC 35405 / DSM 14222 / CIP 103919 / JCM 8153 / KCTC 15104).